We begin with the raw amino-acid sequence, 592 residues long: Signal peptide peptidase-like 2B (592 aa).

A signal peptide spans 1–25; it reads MAAAVAAALARLLAAFLLLAAQVAC. The Lumenal portion of the chain corresponds to 26 to 174; it reads EYGMVHVVSQ…APKEPVLDYN (149 aa). The 79-residue stretch at 71–149 folds into the PA domain; sequence TASLLCSAAD…VALLSYKDML (79 aa). N-linked (GlcNAc...) asparagine glycans are attached at residues Asn-97 and Asn-129. Residues 175-195 form a helical membrane-spanning segment; that stretch reads MVIIFIMAVGTVAIGGYWAGS. Topologically, residues 196 to 221 are cytoplasmic; it reads RDVKKRYMKHKRDDGPEKQEDEAVDV. A helical transmembrane segment spans residues 222–244; the sequence is TPVMTCVFVVMCCSMLVLLYYFY. Over 245-248 the chain is Lumenal; it reads DLLV. The helical transmembrane segment at 249 to 271 threads the bilayer; sequence YVVIGIFCLASATGLYSCLAPCV. Residues 272 to 293 are Cytoplasmic-facing; the sequence is RRLPFGKCRIPNNSLPYFHKRP. Residues 294-314 form a helical membrane-spanning segment; sequence QARMLLLALFCVAVSVVWGVF. The Lumenal segment spans residues 315 to 319; that stretch reads RNEDQ. The chain crosses the membrane as a helical span at residues 320–340; that stretch reads WAWVLQDALGIAFCLYMLKTI. Residues 341 to 348 lie on the Cytoplasmic side of the membrane; sequence RLPTFKAC. A helical transmembrane segment spans residues 349–369; it reads TLLLLVLFLYDIFFVFITPFL. Asp-359 is a catalytic residue. The Lumenal segment spans residues 370-412; sequence TKSGSSIMVEVATGPSDSATREKLPMVLKVPRLNSSPLALCDR. Residues 413–433 traverse the membrane as a helical segment; it reads PFSLLGFGDILVPGLLVAYCH. Residue Asp-421 is part of the active site. Residues 434-445 lie on the Cytoplasmic side of the membrane; it reads RFDIQVQSSRVY. A helical membrane pass occupies residues 446-466; it reads FVACTIAYGVGLLVTFVALAL. The Lumenal segment spans residues 467–470; the sequence is MQRG. Residues 471-491 traverse the membrane as a helical segment; sequence QPALLYLVPCTLVTSCAVALW. The short motif at 472–474 is the PAL element; sequence PAL. Residues 492–592 lie on the Cytoplasmic side of the membrane; sequence RRELGVFWTG…SPVTQPGASA (101 aa). The segment covering 512–524 has biased composition (pro residues); the sequence is PWAPAPADGPQPP. The disordered stretch occupies residues 512–592; the sequence is PWAPAPADGP…SPVTQPGASA (81 aa). Residues 580–592 are compositionally biased toward polar residues; it reads AQPSPVTQPGASA.

Belongs to the peptidase A22B family. As to quaternary structure, monomer. Homodimer. Interacts with ITM2B. Interacts with TNF. Interacts with the simian foamy virus envelope glycoprotein gp130 and its processed leader peptide gp18LP; preferentially interacts with the leader peptide gp18LP. In terms of processing, glycosylated. In terms of tissue distribution, expressed predominantly in adrenal cortex and mammary gland.

It localises to the cell membrane. The protein resides in the golgi apparatus membrane. Its subcellular location is the lysosome membrane. It is found in the endosome membrane. The protein localises to the membrane. Its function is as follows. Intramembrane-cleaving aspartic protease (I-CLiP) that cleaves type II membrane signal peptides in the hydrophobic plane of the membrane. Functions in ITM2B and TNF processing. Catalyzes the intramembrane cleavage of the anchored fragment of shed TNF-alpha (TNF), which promotes the release of the intracellular domain (ICD) for signaling to the nucleus. May play a role in the regulation of innate and adaptive immunity. Catalyzes the intramembrane cleavage of the simian foamy virus processed leader peptide gp18 of the envelope glycoprotein gp130 dependently of prior ectodomain shedding by furin or furin-like proprotein convertase (PC)-mediated cleavage proteolysis. The polypeptide is Signal peptide peptidase-like 2B (Homo sapiens (Human)).